Reading from the N-terminus, the 534-residue chain is 2,3-bisphosphoglycerate-independent phosphoglycerate mutase (534 aa).

Mn(2+) is bound by residues Asp15 and Ser65. Ser65 acts as the Phosphoserine intermediate in catalysis. Residues His126, Arg156–Asp157, Arg188, Arg194, Arg260–Arg263, and Lys333 each bind substrate. The Mn(2+) site is built by Asp400, His404, Asp441, His442, and His459.

Belongs to the BPG-independent phosphoglycerate mutase family. Monomer. Requires Mn(2+) as cofactor.

It catalyses the reaction (2R)-2-phosphoglycerate = (2R)-3-phosphoglycerate. It participates in carbohydrate degradation; glycolysis; pyruvate from D-glyceraldehyde 3-phosphate: step 3/5. Its function is as follows. Catalyzes the interconversion of 2-phosphoglycerate and 3-phosphoglycerate. This is 2,3-bisphosphoglycerate-independent phosphoglycerate mutase from Acaryochloris marina (strain MBIC 11017).